The primary structure comprises 803 residues: MTFNHKKMEPKWQQYWSEHNTFKTTEDKNKDNFYALDMFPYPSGAGLHVGHPEGYTATDILSRMKRMQGKNVLHPIGWDAFGLPAEQYAIDTGNDPEEFTALNIANFTRQIKSLGFSYDWDREINTTDPEYYKWTQWIFEKLYEKGLAYEAEIAVNWCPALGTVLANEEVIDGKSERGGFPVFRKPMRQWMLKITAYADRLLDDLDLVDWPENIKDMQRNWIGRSEGAEVTFKIKDSDETFNVFTTRPDTLFGATYTVFAPEHELIEKITTPEQKEAVEAYKKQVELKSELERTDLAKDKTGVFTGAYAINPINGEEVPIWIADYVLIQYGTGAIMAVPAHDERDFEFAQQFGLNIRPVLEGGDVTKEAFTGDGPHINSDFLNGLAKAEAITAAIDWLEKEGIGSRKITYRLRDWLFSRQRYWGEPIPVIHWEDGETTLVPEDELPLLLPKATEIKPSGTGESPLANLHDWVNVTDKNGRKGRRETNTMPQWAGSSWYFLRYIDPNNSEAIADKEKLAEWLPVDVYIGGAEHAVLHLLYARFWHKFLYDIGVVPTKEPFQKLFNQGMILGENNEKMSKSRGNVVNPDEVVEKYGADTLRLYEMFMGPLEASIAWNENGLEGARKFLDRIWRLLVTEEGTLAEKVTTDANANLEKAYHHMVKTVTNHYENLRFNTGISQLMIFINEAYKQDTIPKQYVEGFVQLLSPIAPHLAEELWEILGHTETISYVAWPTYDETKLVEDEVEIVLQVNGKVKSKITVAKSLEKEELEKIAQEDNKMKENLEGKTIRKVIVVPGKLVNIVAN.

The short motif at 40 to 51 (PYPSGAGLHVGH) is the 'HIGH' region element. The short motif at 575–579 (KMSKS) is the 'KMSKS' region element. Lys578 serves as a coordination point for ATP.

Belongs to the class-I aminoacyl-tRNA synthetase family.

It is found in the cytoplasm. It carries out the reaction tRNA(Leu) + L-leucine + ATP = L-leucyl-tRNA(Leu) + AMP + diphosphate. This Listeria monocytogenes serotype 4b (strain F2365) protein is Leucine--tRNA ligase.